A 255-amino-acid polypeptide reads, in one-letter code: Complement C1q-like protein 3 (255 aa).

An N-terminal signal peptide occupies residues 1–20; that stretch reads MVLLLVILIPVLVSSAGTSA. The interval 39–109 is disordered; it reads KAPSTAATPD…GLPGPPGAPG (71 aa). Residues 61–111 enclose the Collagen-like domain; the sequence is GPKGEAGRPGKAGPRGPPGEPGPPGPVGPPGEKGEPGRQGLPGPPGAPGLN. A compositionally biased stretch (pro residues) spans 75–89; it reads RGPPGEPGPPGPVGP. A C1q domain is found at 122–255; the sequence is STVPKIAFYA…TFSGFIIYAD (134 aa).

As to quaternary structure, forms homooligomers. Interacts with ADGRB3. Forms heterooligomers with C1QL2 and C1QL4, when proteins are coexpressed; this interaction does not occur after secretion. As to expression, highly expressed in brain and white adipose tissue. In gonadal fat pad, expressed at lower levels in adipocytes than in the stromal vascular fraction (VSP), which contains preadipocytes, fibroblasts, endothelial cells and occasional immune cells. Expression exhibits sexually dimorphism, with higher levels in females than in males (at protein level). Tends to be up-regulated in adipose tissue from obese males, but not females. Expressed in glial cells.

It is found in the secreted. Functionally, may regulate the number of excitatory synapses that are formed on hippocampus neurons. Has no effect on inhibitory synapses. Plays a role in glucose homeostasis. Via AMPK signaling pathway, stimulates glucose uptake in adipocytes, myotubes and hepatocytes and enhances insulin-stimulated glucose uptake. In a hepatoma cell line, reduces the expression of gluconeogenic enzymes G6PC1 and PCK1 and hence decreases de novo glucose production. The polypeptide is Complement C1q-like protein 3 (C1ql3) (Mus musculus (Mouse)).